A 285-amino-acid chain; its full sequence is Putative sugar uptake protein lp_2503 (285 aa).

The next 9 helical transmembrane spans lie at 2–21, 31–48, 55–72, 112–134, 147–169, 179–196, 209–228, 233–255, and 264–283; these read GILI…LISG, TLGM…LWAV, SKIW…SIGQ, GNMY…LTSL, NWGV…TIVV, VVMP…IWSF, NIVT…MAMA, AVAY…YLLG, and VYVV…LSLM.

Belongs to the GRP transporter (TC 2.A.7.5) family.

It localises to the cell membrane. In Lactiplantibacillus plantarum (strain ATCC BAA-793 / NCIMB 8826 / WCFS1) (Lactobacillus plantarum), this protein is Putative sugar uptake protein lp_2503.